An 80-amino-acid polypeptide reads, in one-letter code: UPF0248 protein MJ1316 (80 aa).

This sequence belongs to the UPF0248 family.

This is UPF0248 protein MJ1316 from Methanocaldococcus jannaschii (strain ATCC 43067 / DSM 2661 / JAL-1 / JCM 10045 / NBRC 100440) (Methanococcus jannaschii).